The primary structure comprises 188 residues: uncharacterized protein (188 aa).

Residues 121–139 (IWLYGGASLITTFINLGLV) form a helical membrane-spanning segment.

The protein to B.subtilis YwjB.

Its subcellular location is the membrane. This is an uncharacterized protein from Bacillus subtilis (strain 168).